The sequence spans 151 residues: Pseudo histidine-containing phosphotransfer protein 2 (151 aa).

Residues 38 to 133 (SPNFVEEVAA…ATLKQKLESY (96 aa)) form the HPt domain.

Functionally, functions as a two-component phosphorelay mediator between cytokinin sensor histidine kinases and response regulators (B-type ARRs). Plays an important role in propagating cytokinin signal transduction. The protein is Pseudo histidine-containing phosphotransfer protein 2 of Oryza sativa subsp. japonica (Rice).